Consider the following 136-residue polypeptide: Large ribosomal subunit protein eL27 (136 aa).

One can recognise a KOW domain in the interval 5 to 36; it reads MKPGKVVLVLRGKYAGRKAVVVKQQDEGVSDR.

It belongs to the eukaryotic ribosomal protein eL27 family. As to quaternary structure, component of the large ribosomal subunit.

It localises to the cytoplasm. Its subcellular location is the cytosol. The protein localises to the rough endoplasmic reticulum. In terms of biological role, component of the large ribosomal subunit. The protein is Large ribosomal subunit protein eL27 (rpl-27) of Caenorhabditis elegans.